The sequence spans 1086 residues: NAD(P) transhydrogenase, mitochondrial (1086 aa).

Residues 1-43 (MANLLKTVVTGCSCPFLSNLGSCKVLPGKKNFLRTFHTHRILW) constitute a mitochondrion transit peptide. The Mitochondrial matrix portion of the chain corresponds to 44–474 (CSAPVKPGIP…TITPFRKTMT (431 aa)). Lys-70 is modified (N6-acetyllysine). An N6-succinyllysine modification is found at Lys-117. An NAD(+)-binding site is contributed by 182 to 184 (RVT). At Lys-224 the chain carries N6-succinyllysine. Residues Val-237, 257 to 259 (DTR), and Gly-287 contribute to the NAD(+) site. N6-succinyllysine is present on Lys-294. Positions 300 and 319 each coordinate NAD(+). Position 331 is an N6-succinyllysine (Lys-331). The residue at position 397 (Lys-397) is an N6-acetyllysine. The next 4 membrane-spanning stretches (helical) occupy residues 475–493 (SASV…GIAA), 501–521 (MVTT…GVTP), 527–546 (LMSV…LVLM), and 558–578 (GLAA…FLVT). The Mitochondrial matrix portion of the chain corresponds to 579-595 (QRMLDMFKRPTDPPEYN). A run of 5 helical transmembrane segments spans residues 596 to 616 (YLYL…LYSG), 622 to 642 (IMYL…STQG), 646 to 666 (LGNA…LGGL), 672 to 691 (LLAQ…LTIA), and 702 to 722 (LVAA…IAEY). The Cytoplasmic portion of the chain corresponds to 723-739 (IIEYPHFATDAAANLTK). A run of 5 helical transmembrane segments spans residues 740–760 (IVAY…LVAY), 778–797 (HLLN…PFMM), 801–819 (FTTG…AVMG), 833–853 (VVIT…GFLL), and 857–879 (LLTI…MCVA). The Mitochondrial matrix segment spans residues 880–1086 (MNRSLANVIL…QAKVRESYQK (207 aa)). Residues Tyr-933, 965-970 (VAGRMP), 1009-1011 (NDT), 1026-1027 (GM), 1042-1049 (KRSLGVGY), and 1068-1069 (DA) each bind NADP(+). Residue Lys-1079 is modified to N6-succinyllysine.

In the N-terminal section; belongs to the AlaDH/PNT family. This sequence in the C-terminal section; belongs to the PNT beta subunit family. Homodimer.

It is found in the mitochondrion inner membrane. The catalysed reaction is NAD(+) + NADPH + H(+)(in) = NADH + NADP(+) + H(+)(out). The transhydrogenation between NADH and NADP is coupled to respiration and ATP hydrolysis and functions as a proton pump across the membrane. May play a role in reactive oxygen species (ROS) detoxification in the adrenal gland. The sequence is that of NAD(P) transhydrogenase, mitochondrial (NNT) from Bos taurus (Bovine).